The chain runs to 297 residues: uncharacterized protein (297 aa).

Residues 1-60 (MNIELRHLRYFVAVAEELHFGRAAARLNISQPPLSQQIQALEQQIGARLLARTNRSVLLT) enclose the HTH lysR-type domain. The segment at residues 20-40 (FGRAAARLNISQPPLSQQIQA) is a DNA-binding region (H-T-H motif).

It belongs to the LysR transcriptional regulatory family.

This is an uncharacterized protein from Escherichia coli (strain K12).